Consider the following 647-residue polypeptide: Protein INVOLVED IN DE NOVO 2 (647 aa).

Disordered regions lie at residues 1 to 20 and 101 to 123; these read MGST…SESE and SASE…DCDH. The span at 9–20 shows a compositional bias: acidic residues; it reads SDDEDSDISESE. Positions 253 to 508 form a coiled coil; sequence IAELTEEEAR…NIMKEWNTNI (256 aa).

Interacts with FMD1/IDNL1. Forms a complex with FMD1/IDNL1 and FMD2/INDL2. Can form homodimers. Interacts with MORC6.

Its function is as follows. Forms a complex with FDM1/IDNL1 and FDM2/IDNL2 that is required for RNA-directed DNA methylation (RdDM) and that functions at a downstream step of the RdDM pathway and downstream of small interfering RNA (siRNA) formation. Required for de novo DNA methylation, siRNA accumulation and siRNA-mediated maintenance methylation. Required for several post-transcriptional gene silencing pathways. Binds double-stranded RNAs (dsRNAs) with 5'-overhangs through its XS domain. Binds long non-coding RNA (lncRNA) in an AGO4-dependent manner and associates with DRM2, resulting in DNA methylation of RdDM target loci. Mediates the silencing of a subset of MORC6 target loci. The chain is Protein INVOLVED IN DE NOVO 2 from Arabidopsis thaliana (Mouse-ear cress).